Reading from the N-terminus, the 95-residue chain is Aspartyl/glutamyl-tRNA(Asn/Gln) amidotransferase subunit C (95 aa).

The protein belongs to the GatC family. As to quaternary structure, heterotrimer of A, B and C subunits.

The enzyme catalyses L-glutamyl-tRNA(Gln) + L-glutamine + ATP + H2O = L-glutaminyl-tRNA(Gln) + L-glutamate + ADP + phosphate + H(+). The catalysed reaction is L-aspartyl-tRNA(Asn) + L-glutamine + ATP + H2O = L-asparaginyl-tRNA(Asn) + L-glutamate + ADP + phosphate + 2 H(+). Its function is as follows. Allows the formation of correctly charged Asn-tRNA(Asn) or Gln-tRNA(Gln) through the transamidation of misacylated Asp-tRNA(Asn) or Glu-tRNA(Gln) in organisms which lack either or both of asparaginyl-tRNA or glutaminyl-tRNA synthetases. The reaction takes place in the presence of glutamine and ATP through an activated phospho-Asp-tRNA(Asn) or phospho-Glu-tRNA(Gln). The polypeptide is Aspartyl/glutamyl-tRNA(Asn/Gln) amidotransferase subunit C (Thermodesulfovibrio yellowstonii (strain ATCC 51303 / DSM 11347 / YP87)).